The chain runs to 228 residues: Outer membrane protein assembly factor BamE (228 aa).

The signal sequence occupies residues 1–29 (MNPILKGVYSPARLGVVALTLFGILGVTG). C30 carries the N-palmitoyl cysteine lipid modification. Residue C30 is the site of S-diacylglycerol cysteine attachment. The segment at 197–228 (DFFGSSKKDPDPQSPQLGPGTLNDVPKPADSK) is disordered.

Belongs to the BamE family. As to quaternary structure, part of the Bam complex.

The protein localises to the cell outer membrane. Part of the outer membrane protein assembly complex, which is involved in assembly and insertion of beta-barrel proteins into the outer membrane. This is Outer membrane protein assembly factor BamE from Polynucleobacter necessarius subsp. necessarius (strain STIR1).